Reading from the N-terminus, the 78-residue chain is Sec-independent protein translocase protein TatA (78 aa).

The helical transmembrane segment at 1 to 21 (MGSLSIWHWLIVLLIVALVFG) threads the bilayer. Basic and acidic residues-rich tracts occupy residues 39-57 (FKEG…RDQL) and 65-78 (VDAK…GDSR). Positions 39–78 (FKEGMKDGETPEGQQRDQLSRTNTVDVDAKEKAPHSGDSR) are disordered.

It belongs to the TatA/E family. In terms of assembly, the Tat system comprises two distinct complexes: a TatABC complex, containing multiple copies of TatA, TatB and TatC subunits, and a separate TatA complex, containing only TatA subunits. Substrates initially bind to the TatABC complex, which probably triggers association of the separate TatA complex to form the active translocon.

It is found in the cell inner membrane. Its function is as follows. Part of the twin-arginine translocation (Tat) system that transports large folded proteins containing a characteristic twin-arginine motif in their signal peptide across membranes. TatA could form the protein-conducting channel of the Tat system. This is Sec-independent protein translocase protein TatA from Paraburkholderia phymatum (strain DSM 17167 / CIP 108236 / LMG 21445 / STM815) (Burkholderia phymatum).